Consider the following 165-residue polypeptide: Chorismate pyruvate-lyase (165 aa).

The substrate site is built by Met35, Arg77, Leu115, and Glu156.

Belongs to the UbiC family. As to quaternary structure, monomer.

The protein resides in the cytoplasm. It catalyses the reaction chorismate = 4-hydroxybenzoate + pyruvate. It functions in the pathway cofactor biosynthesis; ubiquinone biosynthesis. Functionally, removes the pyruvyl group from chorismate, with concomitant aromatization of the ring, to provide 4-hydroxybenzoate (4HB) for the ubiquinone pathway. The polypeptide is Chorismate pyruvate-lyase (Shigella sonnei (strain Ss046)).